The primary structure comprises 123 residues: Glutaredoxin-like protein (123 aa).

The Glutaredoxin domain occupies 27–123 (INEVEESITN…GTLFNDLKKK (97 aa)).

It belongs to the glutaredoxin family.

The chain is Glutaredoxin-like protein (grxB) from Dictyostelium discoideum (Social amoeba).